Here is a 372-residue protein sequence, read N- to C-terminus: tRNA-specific 2-thiouridylase MnmA (372 aa).

Residues 9 to 16 (GLSGGVDS) and M35 each bind ATP. The interaction with target base in tRNA stretch occupies residues 95–97 (NPD). The Nucleophile role is filled by C100. Residues C100 and C198 are joined by a disulfide bond. Residue G124 participates in ATP binding. Residues 148–150 (KDQ) are interaction with tRNA. C198 serves as the catalytic Cysteine persulfide intermediate. The segment at 317-318 (RY) is interaction with tRNA.

It belongs to the MnmA/TRMU family.

It is found in the cytoplasm. The catalysed reaction is S-sulfanyl-L-cysteinyl-[protein] + uridine(34) in tRNA + AH2 + ATP = 2-thiouridine(34) in tRNA + L-cysteinyl-[protein] + A + AMP + diphosphate + H(+). Catalyzes the 2-thiolation of uridine at the wobble position (U34) of tRNA, leading to the formation of s(2)U34. This is tRNA-specific 2-thiouridylase MnmA from Delftia acidovorans (strain DSM 14801 / SPH-1).